The chain runs to 302 residues: MQTPEIKEGTEQYLWRRKTMNPGDKGVKRKGSDRQREKMSVIVMAGTEDARRIISRLSGMPWVEVTATATTEHGSDLAEKSGASRTVTGALDSDGLRELMADLDACILIDATHPFAAQATENALRACRETGTIYVRFERPEVIPDGVIRVGSFREAGEVASSLIGDGEVVMHLAGVSTLGDVLRSLEPERVAVRVLPSTSSIEKCLQLGVPPSHIIAMQGRFSAEMNLALLREYRAGAVITKESGETGGLPEKVEAASELGIPVILVERPEVNLEGEAVFGNINDLMDHVLKILRDMGQPGD.

Positions 1-10 (MQTPEIKEGT) are enriched in basic and acidic residues. Residues 1 to 37 (MQTPEIKEGTEQYLWRRKTMNPGDKGVKRKGSDRQRE) are disordered.

It belongs to the precorrin-6x reductase family.

It catalyses the reaction Co-precorrin-6B + NAD(+) = Co-precorrin-6A + NADH + H(+). The protein operates within cofactor biosynthesis; adenosylcobalamin biosynthesis; cob(II)yrinate a,c-diamide from sirohydrochlorin (anaerobic route): step 7/10. Catalyzes the reduction of the macrocycle of cobalt-precorrin-6A to cobalt-precorrin-6B. This is Cobalt-precorrin-6A reductase (cbiJ) from Methanothermobacter thermautotrophicus (strain ATCC 29096 / DSM 1053 / JCM 10044 / NBRC 100330 / Delta H) (Methanobacterium thermoautotrophicum).